The chain runs to 526 residues: MGSSKSKPKDPSQRRRSLEPPDSTHHGGFPASQTPNKTAAPDTHRTPSRSFGTVATEPKLFGGFNTSDTVTSPQRAGALAGGVTTFVALYDYESWIETDLSFKKGERLQIVNNTEGNWWLAHSLTTGQTGYIPSNYVAPSDSIQAEEWYFGKITRRESERLLLNPENPRGTFLVRESETTKGAYCLSVSDFDNAKGLNVKHYKIRKLDSGGFYITSRTQFSSLQQLVAYYSKHADGLCHRLTNVCPTSKPQTQGLAKDAWEIPRESLRLEVKLGQGCFGEVWMGTWNGTTRVAIKTLKPGTMSPEAFLQEAQVMKKLRHEKLVQLYAVVSEEPIYIVIEYMSKGSLLDFLKGEMGKYLRLPQLVDMAAQIASGMAYVERMNYVHRDLRAANILVGENLVCKVADFGLARLIEDNEYTARQGAKFPIKWTAPEAALYGRFTIKSDVWSFGILLTELTTKGRVPYPGMGNGEVLDRVERGYRMPCPPECPESLHDLMCQCWRRDPEERPTFEYLQAQLLPACVLEVAE.

Residues 1 to 57 (MGSSKSKPKDPSQRRRSLEPPDSTHHGGFPASQTPNKTAAPDTHRTPSRSFGTVATE) are disordered. G2 carries the N-myristoyl glycine; by host lipid modification. Basic and acidic residues predominate over residues 7–25 (KPKDPSQRRRSLEPPDSTH). Residues 81 to 142 (GGVTTFVALY…PSNYVAPSDS (62 aa)) enclose the SH3 domain. In terms of domain architecture, SH2 spans 148 to 245 (WYFGKITRRE…GLCHRLTNVC (98 aa)). In terms of domain architecture, Protein kinase spans 267-517 (LRLEVKLGQG…TFEYLQAQLL (251 aa)). Residues 273-281 (LGQGCFGEV) and K295 contribute to the ATP site. D386 functions as the Proton acceptor in the catalytic mechanism. Residue Y416 is modified to Phosphotyrosine; by autocatalysis.

It belongs to the protein kinase superfamily. Tyr protein kinase family. SRC subfamily. As to quaternary structure, homodimer. Post-translationally, the phosphorylated form is termed pp60v-src.

It carries out the reaction L-tyrosyl-[protein] + ATP = O-phospho-L-tyrosyl-[protein] + ADP + H(+). Its function is as follows. This phosphoprotein, required for both the initiation and the maintenance of neoplastic transformation, is a protein kinase that catalyzes the phosphorylation of tyrosine residues in vitro. Causes mitotic slippage in addition to cytokinesis failure in the host cell. Phosphorylates and attenuates the activity of host CDK1, possibly causing the mitotic slippage. The protein is Tyrosine-protein kinase transforming protein Src (V-SRC) of Rous sarcoma virus subgroup A (strain Schmidt-Ruppin) (RSV-SR-A).